Consider the following 501-residue polypeptide: Armadillo repeat-containing protein 6 (501 aa).

Ser64 is modified (phosphoserine). ARM repeat units follow at residues 220–264 (GVLP…HAHN), 274–318 (KGLK…DLGG), 319–369 (LSIL…RAGG), and 370–412 (TESI…VEGG). The residue at position 263 (His263) is a Pros-methylhistidine.

This sequence belongs to the ARMC6 family. In terms of processing, methylated at His-263 by METTL9.

The polypeptide is Armadillo repeat-containing protein 6 (ARMC6) (Homo sapiens (Human)).